A 160-amino-acid chain; its full sequence is uncharacterized protein (160 aa).

A run of 4 helical transmembrane segments spans residues 7-27 (IFLKIALVLIGIPILALCIFL), 48-68 (LVFIYLYVTAIPFYFALYQAF), 95-115 (AVTISIFYAAGMPVFYLMAEI), and 121-141 (IIVIGLVIIFASMVIAVFAAV).

The protein resides in the cell membrane. This is an uncharacterized protein from Bacillus subtilis (strain 168).